A 385-amino-acid polypeptide reads, in one-letter code: Digeranylgeranylglycerophospholipid reductase 2 (385 aa).

10 residues coordinate FAD: alanine 13, glutamate 32, cysteine 43, alanine 44, glycine 46, arginine 95, alanine 119, aspartate 273, glycine 285, and isoleucine 286.

It belongs to the geranylgeranyl reductase family. DGGGPL reductase subfamily. The cofactor is FAD.

It carries out the reaction a 2,3-bis-O-phytanyl-sn-glycerol 1-phospholipid + 8 A = a 2,3-bis-O-(geranylgeranyl)-sn-glycerol 1-phospholipid + 8 AH2. It catalyses the reaction 2,3-bis-O-(phytanyl)-sn-glycerol 1-phosphate + 8 A = 2,3-bis-O-(geranylgeranyl)-sn-glycerol 1-phosphate + 8 AH2. The enzyme catalyses CDP-2,3-bis-O-(geranylgeranyl)-sn-glycerol + 8 AH2 = CDP-2,3-bis-O-(phytanyl)-sn-glycerol + 8 A. The catalysed reaction is archaetidylserine + 8 AH2 = 2,3-bis-O-phytanyl-sn-glycero-3-phospho-L-serine + 8 A. It functions in the pathway membrane lipid metabolism; glycerophospholipid metabolism. In terms of biological role, is involved in the reduction of 2,3-digeranylgeranylglycerophospholipids (unsaturated archaeols) into 2,3-diphytanylglycerophospholipids (saturated archaeols) in the biosynthesis of archaeal membrane lipids. Catalyzes the formation of archaetidic acid (2,3-di-O-phytanyl-sn-glyceryl phosphate) from 2,3-di-O-geranylgeranylglyceryl phosphate (DGGGP) via the hydrogenation of each double bond of the isoprenoid chains. Is also probably able to reduce double bonds of geranyl groups in CDP-2,3-bis-O-(geranylgeranyl)-sn-glycerol and archaetidylserine, thus acting at various stages in the biosynthesis of archaeal membrane lipids. This chain is Digeranylgeranylglycerophospholipid reductase 2, found in Methanothermobacter thermautotrophicus (strain ATCC 29096 / DSM 1053 / JCM 10044 / NBRC 100330 / Delta H) (Methanobacterium thermoautotrophicum).